We begin with the raw amino-acid sequence, 498 residues long: Type VI secretion system sheath protein TssC1 (498 aa).

Forms a heterodimer with TssB1. Heterodimers assemble to form the sheath of the T6SS machinery. Interacts with TssA1.

Its function is as follows. Core component of the H1 type VI (H1-T6SS) secretion system that plays a role in the release of toxins targeting both eukaryotic and prokaryotic species. Forms the sheath of the structure by assembling into tubules together with TssB1 resulting in the stacking of cogwheel-like structures showing predominantly a 12-fold symmetry. The sheath contracts to provide the energy needed for effector delivery. This is Type VI secretion system sheath protein TssC1 from Pseudomonas aeruginosa (strain ATCC 15692 / DSM 22644 / CIP 104116 / JCM 14847 / LMG 12228 / 1C / PRS 101 / PAO1).